The following is a 300-amino-acid chain: Cation-efflux pump FieF (300 aa).

4 helical membrane-spanning segments follow: residues 12–32, 39–59, 82–102, and 114–134; these read AAIA…FAWW, ILAA…NLLV, AALA…LTSI, and PGVG…LVTF. 2 residues coordinate Zn(2+): Asp-45 and Asp-49. Zn(2+) contacts are provided by His-153 and Asp-157. Transmembrane regions (helical) follow at residues 156 to 176 and 178 to 198; these read SDVM…YGWH and ADAL…LRMG.

Belongs to the cation diffusion facilitator (CDF) transporter (TC 2.A.4) family. FieF subfamily. Homodimer.

Its subcellular location is the cell inner membrane. The enzyme catalyses Zn(2+)(in) + H(+)(out) = Zn(2+)(out) + H(+)(in). It catalyses the reaction Cd(2+)(in) + H(+)(out) = Cd(2+)(out) + H(+)(in). It carries out the reaction Fe(2+)(in) + H(+)(out) = Fe(2+)(out) + H(+)(in). Divalent metal cation transporter which exports Zn(2+), Cd(2+) and possibly Fe(2+). May be involved in zinc and iron detoxification by efflux. The protein is Cation-efflux pump FieF of Salmonella arizonae (strain ATCC BAA-731 / CDC346-86 / RSK2980).